Here is a 1564-residue protein sequence, read N- to C-terminus: ATP-dependent permease PDR10 (1564 aa).

The span at 1–16 (MLQAPSSSNSGLNQGN) shows a compositional bias: polar residues. The segment at 1-37 (MLQAPSSSNSGLNQGNAAPDGPPNETQPYEGLDAAAQ) is disordered. Over 1–587 (MLQAPSSSNS…AAIFFAILFN (587 aa)) the chain is Cytoplasmic. One can recognise an ABC transporter 1 domain in the interval 174–430 (ISRRLFHRTH…FQRMGYVCPE (257 aa)). 5 helical membrane-spanning segments follow: residues 588-608 (AFSS…TEKH), 624-644 (TFSD…PYYF), 674-694 (RCIG…SVLL), 699-719 (MYTG…WISY), and 732-752 (INEF…GPNY). N-linked (GlcNAc...) asparagine glycosylation is present at Asn754. Residues 839-849 (KGIVSEKKKKN) show a composition bias toward basic residues. A disordered region spans residues 839–872 (KGIVSEKKKKNQPTLSTSDAEKDVEMNNNSSATD). The chain crosses the membrane as a helical span at residues 841–861 (IVSEKKKKNQPTLSTSDAEKD). Topologically, residues 862–1304 (VEMNNNSSAT…IFMFTVVFNP (443 aa)) are cytoplasmic. In terms of domain architecture, ABC transporter 2 spans 923-1166 (FHWKNLCYDI…MINYFEAHGA (244 aa)). 959 to 966 (GASGAGKT) provides a ligand contact to ATP. 6 consecutive transmembrane segments (helical) span residues 1305 to 1325 (ILQQ…ARER), 1340 to 1360 (ILVE…VYYY), 1390 to 1410 (VYIS…ENAA), 1426 to 1446 (VLAT…VSPL), 1459 to 1479 (ANAS…PSGM), and 1491 to 1511 (STGT…FCQF). Topologically, residues 1512 to 1564 (SSTNDYLATVSSSYSRRWMNYGIFSAYIVFDYCAAIFLYWLVRVPKKSKKLKK) are cytoplasmic.

This sequence belongs to the ABC transporter superfamily. ABCG family. PDR (TC 3.A.1.205) subfamily.

It localises to the membrane. The sequence is that of ATP-dependent permease PDR10 (PDR10) from Saccharomyces cerevisiae (strain ATCC 204508 / S288c) (Baker's yeast).